The primary structure comprises 211 residues: Putative hydrolase SMU_367 (211 aa).

The signal sequence occupies residues 1-29 (MKKQFLEKAVFTVAATAATVVLGNKMADA). In terms of domain architecture, LysM spans 30-74 (DTYTLQEGDSFFSVAQRYHMDAYELASMNGKDITSLILPGQTLTV). The tract at residues 77-101 (SAAPDNQAAAPTDTTQATTETNDAN) is disordered. Residues 78–101 (AAPDNQAAAPTDTTQATTETNDAN) are compositionally biased toward low complexity. A Peptidase C51 domain is found at 85–209 (AAPTDTTQAT…GTPGSVSYIY (125 aa)).

The chain is Putative hydrolase SMU_367 from Streptococcus mutans serotype c (strain ATCC 700610 / UA159).